The sequence spans 90 residues: Electron transfer flavoprotein regulatory factor 1 (90 aa).

It belongs to the complex I LYR family. In terms of assembly, homotetramer. Interacts with NDUFAB1. Interacts with ETFA. Interacts with ETFB.

The protein resides in the mitochondrion. Its function is as follows. Acts as a regulator of the electron transfer flavoprotein by promoting the removal of flavin from the ETF holoenzyme (composed of ETFA and ETFB). This Homo sapiens (Human) protein is Electron transfer flavoprotein regulatory factor 1.